The sequence spans 656 residues: Period circadian protein (656 aa).

The segment covering 1–34 (KVSDSAYSNSCSNSQSQRSGSSKSRLSGSHSSGS) has biased composition (low complexity). Residues 1-161 (KVSDSAYSNS…AAQSFPIPSP (161 aa)) form a disordered region. Positions 53 to 66 (KRNKDKSRKKKKNK) match the Nuclear localization signal motif. Positions 53–66 (KRNKDKSRKKKKNK) are enriched in basic residues. A compositionally biased stretch (basic and acidic residues) spans 108-120 (ELQDQQHGEDHSE). PAS domains are found at residues 224–359 (DSFC…ATPI) and 377–483 (FAIR…RVFQ). Positions 580 to 656 (TSIAGTGGTG…SSRGGSTAIP (77 aa)) are disordered. A run of 26 repeats spans residues 584–585 (GT), 587–588 (GT), 589–590 (GT), 591–592 (GT), 593–594 (GT), 595–596 (GT), 597–598 (GT), 599–600 (GT), 601–602 (GT), 603–604 (GT), 605–606 (GT), 607–608 (GT), 609–610 (GT), 611–612 (GT), 613–614 (GT), 615–616 (GT), 617–618 (GT), 619–620 (GT), 621–622 (GT), 623–624 (GT), 625–626 (GT), 627–628 (GT), 629–630 (GT), 631–632 (GT), 633–634 (GN), and 635–636 (GT). The segment covering 584-642 (GTGGTGTGTGTGTGTGTGTGTGTGTGTGTGTGTGTGTGTGTGTGTGTGTGNGTNSGTGT) has biased composition (gly residues). Positions 584 to 644 (GTGGTGTGTG…GTNSGTGTGT (61 aa)) are 30 X 2 AA approximate tandem repeats of G-[TN]. One copy of the 27; approximate repeat lies at 637–638 (NS). A run of 3 repeats spans residues 639 to 640 (GT), 641 to 642 (GT), and 643 to 644 (GT). The segment covering 643–656 (GTTSSSRGGSTAIP) has biased composition (low complexity).

In terms of assembly, forms a heterodimer with timeless (TIM); the complex then translocates into the nucleus. Phosphorylated with a circadian rhythmicity, probably by the double-time protein (dbt). Phosphorylation could be implicated in the stability of per monomer and in the formation of heterodimer per-tim.

It localises to the nucleus. Its subcellular location is the cytoplasm. The protein localises to the perinuclear region. Functionally, essential for biological clock functions. Determines the period length of circadian and ultradian rhythms; an increase in PER dosage leads to shortened circadian rhythms and a decrease leads to lengthened circadian rhythms. Essential for the circadian rhythmicity of locomotor activity, eclosion behavior, and for the rhythmic component of the male courtship song that originates in the thoracic nervous system. The biological cycle depends on the rhythmic formation and nuclear localization of the TIM-PER complex. Light induces the degradation of TIM, which promotes elimination of PER. Nuclear activity of the heterodimer coordinatively regulates PER and TIM transcription through a negative feedback loop. Behaves as a negative element in circadian transcriptional loop. Does not appear to bind DNA, suggesting indirect transcriptional inhibition. The sequence is that of Period circadian protein (per) from Drosophila simulans (Fruit fly).